The sequence spans 255 residues: ATP synthase subunit a 2 (255 aa).

Transmembrane regions (helical) follow at residues 26-46, 86-106, 131-151, 205-225, and 230-250; these read SINI…IGVF, LIGP…SIDL, DVNV…GYTL, MIFI…SVPW, and ILIV…YLAM.

The protein belongs to the ATPase A chain family. F-type ATPases have 2 components, CF(1) - the catalytic core - and CF(0) - the membrane proton channel. CF(1) has five subunits: alpha(3), beta(3), gamma(1), delta(1), epsilon(1). CF(0) has three main subunits: a(1), b(2) and c(9-12). The alpha and beta chains form an alternating ring which encloses part of the gamma chain. CF(1) is attached to CF(0) by a central stalk formed by the gamma and epsilon chains, while a peripheral stalk is formed by the delta and b chains.

The protein localises to the cell inner membrane. In terms of biological role, key component of the proton channel; it plays a direct role in the translocation of protons across the membrane. The polypeptide is ATP synthase subunit a 2 (Photobacterium profundum (strain SS9)).